Consider the following 164-residue polypeptide: Phosphopantetheine adenylyltransferase (164 aa).

T10 lines the substrate pocket. ATP is bound by residues 10–11 and H18; that span reads TF. 3 residues coordinate substrate: K42, L74, and R88. ATP is bound by residues 89 to 91, E99, and 124 to 130; these read GIR and NSFISST.

The protein belongs to the bacterial CoaD family. Homohexamer. Mg(2+) is required as a cofactor.

The protein localises to the cytoplasm. The catalysed reaction is (R)-4'-phosphopantetheine + ATP + H(+) = 3'-dephospho-CoA + diphosphate. Its pathway is cofactor biosynthesis; coenzyme A biosynthesis; CoA from (R)-pantothenate: step 4/5. Reversibly transfers an adenylyl group from ATP to 4'-phosphopantetheine, yielding dephospho-CoA (dPCoA) and pyrophosphate. The polypeptide is Phosphopantetheine adenylyltransferase (Pseudoalteromonas translucida (strain TAC 125)).